A 190-amino-acid chain; its full sequence is MSDVAVAETPAVKTPTKAPKANATKVPKVKTAAAHPPFINMVTAAISSLKERKGSSKIAILKYITANYKLGDQVKKINSNLRSALKKGVASKALVQTVGTGATGRFRVAEKTAATAKKPTVKKAATGEKVKKTVVKKTVAKKTGDKVKKAKSPKKIAKPAAKKATKSPSKKVAPKKAAAKPAKKTAALKA.

Positions 1–29 are disordered; that stretch reads MSDVAVAETPAVKTPTKAPKANATKVPKV. Residue S2 is modified to N-acetylserine. Over residues 9 to 29 the composition is skewed to low complexity; it reads TPAVKTPTKAPKANATKVPKV. The 77-residue stretch at 34–110 folds into the H15 domain; sequence AHPPFINMVT…GATGRFRVAE (77 aa). Residues 141–190 are disordered; that stretch reads KKTGDKVKKAKSPKKIAKPAAKKATKSPSKKVAPKKAAAKPAKKTAALKA. Over residues 148-183 the composition is skewed to basic residues; it reads KKAKSPKKIAKPAAKKATKSPSKKVAPKKAAAKPAK.

The protein belongs to the histone H1/H5 family.

The protein localises to the nucleus. The protein resides in the chromosome. Functionally, histones H1 are necessary for the condensation of nucleosome chains into higher-order structures. The chain is Putative histone H1.6 (hil-6) from Caenorhabditis elegans.